The following is a 420-amino-acid chain: MNIYYKNFKKYDTKIYNIIKKEIIRQEEHIELIASENYASKYVMQMQGSLLTNKYAEGYPKNRYYRGCKYIDEIEDLAIKRAKKLFNVDYVNVQPHSGSQANFAVYSALLNPGDLVLGMKLNHGGHLTHGSKANFSGKMYKFISYGVNGEGKLDYNKLLNLANYYRPKMIVGGFSSYSGFINWKKMRFISDKVGAYLFADISHVAGLIVAGIYPNAIPYAHVVTTTTHKTLSGPRGGLILAKEGDDEFYKKLDSAVFPGTQGGPLMHIIAAKAVAFKEAMTLKFKKYQHQLVKNSKSMVEIFLKRKFHVVSGGTKNHLFILNLSNIGLKGDLASEILEKANITVNKNSIPNDKLNPKITSGIRIGTPAITKRGFKEIESKKVAEWICDILENINDKKLINNIKIKVINLCYKYPVYKSFK.

(6S)-5,6,7,8-tetrahydrofolate-binding positions include L121 and 125-127 (GHL). K229 carries the N6-(pyridoxal phosphate)lysine modification.

The protein belongs to the SHMT family. In terms of assembly, homodimer. The cofactor is pyridoxal 5'-phosphate.

It is found in the cytoplasm. It carries out the reaction (6R)-5,10-methylene-5,6,7,8-tetrahydrofolate + glycine + H2O = (6S)-5,6,7,8-tetrahydrofolate + L-serine. It functions in the pathway one-carbon metabolism; tetrahydrofolate interconversion. It participates in amino-acid biosynthesis; glycine biosynthesis; glycine from L-serine: step 1/1. Catalyzes the reversible interconversion of serine and glycine with tetrahydrofolate (THF) serving as the one-carbon carrier. This reaction serves as the major source of one-carbon groups required for the biosynthesis of purines, thymidylate, methionine, and other important biomolecules. Also exhibits THF-independent aldolase activity toward beta-hydroxyamino acids, producing glycine and aldehydes, via a retro-aldol mechanism. The sequence is that of Serine hydroxymethyltransferase from Wigglesworthia glossinidia brevipalpis.